The primary structure comprises 126 residues: Fluoride-specific ion channel FluC (126 aa).

4 helical membrane-spanning segments follow: residues 4 to 24 (YLYIAAGGAAGSLCRYLVSGV), 35 to 55 (IGTFSVNMIGCLFFGLVTGLF), 67 to 87 (LLILTGFMGAFTTFSTYMFES), and 100 to 120 (ALNIGGQSILGFACIVGGLAL). Gly75 and Thr78 together coordinate Na(+).

Belongs to the fluoride channel Fluc/FEX (TC 1.A.43) family.

It localises to the cell inner membrane. The enzyme catalyses fluoride(in) = fluoride(out). Its activity is regulated as follows. Na(+) is not transported, but it plays an essential structural role and its presence is essential for fluoride channel function. Fluoride-specific ion channel. Important for reducing fluoride concentration in the cell, thus reducing its toxicity. The protein is Fluoride-specific ion channel FluC of Maridesulfovibrio salexigens (strain ATCC 14822 / DSM 2638 / NCIMB 8403 / VKM B-1763) (Desulfovibrio salexigens).